Reading from the N-terminus, the 80-residue chain is Large ribosomal subunit protein bL31 (80 aa).

The protein belongs to the bacterial ribosomal protein bL31 family. Type A subfamily. In terms of assembly, part of the 50S ribosomal subunit.

Binds the 23S rRNA. The chain is Large ribosomal subunit protein bL31 from Nostoc punctiforme (strain ATCC 29133 / PCC 73102).